The following is a 256-amino-acid chain: Ribonuclease 3 (256 aa).

Residues 3-125 (LDALQQRLGY…IVGAVFLDAG (123 aa)) form the RNase III domain. Glu-38 contacts Mg(2+). Residue Asp-42 is part of the active site. Positions 111 and 114 each coordinate Mg(2+). The active site involves Glu-114. Residues 152 to 222 (DAKTLLQEYL…AKLALDEVQK (71 aa)) enclose the DRBM domain. Residues 230-256 (RSRAERTGKTRKQPVPQDPQLSLRLKE) are disordered.

This sequence belongs to the ribonuclease III family. Homodimer. Mg(2+) serves as cofactor.

It localises to the cytoplasm. The catalysed reaction is Endonucleolytic cleavage to 5'-phosphomonoester.. Digests double-stranded RNA. Involved in the processing of primary rRNA transcript to yield the immediate precursors to the large and small rRNAs (23S and 16S). Processes some mRNAs, and tRNAs when they are encoded in the rRNA operon. Processes pre-crRNA and tracrRNA of type II CRISPR loci if present in the organism. This chain is Ribonuclease 3, found in Cupriavidus necator (strain ATCC 17699 / DSM 428 / KCTC 22496 / NCIMB 10442 / H16 / Stanier 337) (Ralstonia eutropha).